A 253-amino-acid polypeptide reads, in one-letter code: tRNA pseudouridine synthase A (253 aa).

Catalysis depends on D51, which acts as the Nucleophile. Substrate is bound at residue Y110.

Belongs to the tRNA pseudouridine synthase TruA family. In terms of assembly, homodimer.

The enzyme catalyses uridine(38/39/40) in tRNA = pseudouridine(38/39/40) in tRNA. Formation of pseudouridine at positions 38, 39 and 40 in the anticodon stem and loop of transfer RNAs. The protein is tRNA pseudouridine synthase A of Wolinella succinogenes (strain ATCC 29543 / DSM 1740 / CCUG 13145 / JCM 31913 / LMG 7466 / NCTC 11488 / FDC 602W) (Vibrio succinogenes).